The sequence spans 687 residues: Acetolactate synthase catalytic subunit, mitochondrial (687 aa).

The N-terminal 90 residues, 1-90 (MIRQSTLKNF…AEPDMDTSFV (90 aa)), are a transit peptide targeting the mitochondrion. Residues 43 to 52 (YYSASPLPAS) are compositionally biased toward low complexity. The tract at residues 43-68 (YYSASPLPASKRPEPAPSFNVDPLEQ) is disordered. Position 139 (Glu139) interacts with thiamine diphosphate. FAD is bound by residues Arg241, 355–376 (HGCA…VGAR), and 407–426 (EVSP…VEGD). The thiamine pyrophosphate binding stretch occupies residues 499–579 (QHQMWAAQHW…VKILILNNEE (81 aa)). Mg(2+) contacts are provided by Asp550, Asn577, and Glu579.

This sequence belongs to the TPP enzyme family. Homodimer. The acetolactate synthase complex contains the catalytic subunit ILV2 and the regulatory small subunit ILV6. It depends on Mg(2+) as a cofactor. Requires thiamine diphosphate as cofactor.

The protein resides in the mitochondrion. The enzyme catalyses 2 pyruvate + H(+) = (2S)-2-acetolactate + CO2. It catalyses the reaction 2-oxobutanoate + pyruvate + H(+) = (S)-2-ethyl-2-hydroxy-3-oxobutanoate + CO2. Its pathway is amino-acid biosynthesis; L-isoleucine biosynthesis; L-isoleucine from 2-oxobutanoate: step 1/4. It participates in amino-acid biosynthesis; L-valine biosynthesis; L-valine from pyruvate: step 1/4. Its activity is regulated as follows. The regulatory subunit ILV6 stimulates enzymatic activity seven- to tenfold and confers sensitivity to inhibition by valine and activation by ATP. Its function is as follows. Catalytic subunit of mitochondrial acetolactate synthase, which catalyzes the first of a series of common steps in the biosynthesis of the branched-chain amino acids. Catalyzes the irreversible decarboxylation of pyruvate to a bound hydroxyethyl group that then condenses with either a second pyruvate molecule to form 2-acetolactate (AL) or with 2-ketobutyrate to form 2-aceto-2-hydroxybutyrate (AHB). The first product is the precursor for valine and leucine biosynthesis, while the second leads to isoleucine. The sequence is that of Acetolactate synthase catalytic subunit, mitochondrial (ILV2) from Saccharomyces cerevisiae (strain ATCC 204508 / S288c) (Baker's yeast).